The chain runs to 306 residues: Pantothenate kinase (306 aa).

Residue G90–S97 participates in ATP binding.

Belongs to the prokaryotic pantothenate kinase family.

It localises to the cytoplasm. The enzyme catalyses (R)-pantothenate + ATP = (R)-4'-phosphopantothenate + ADP + H(+). Its pathway is cofactor biosynthesis; coenzyme A biosynthesis; CoA from (R)-pantothenate: step 1/5. The chain is Pantothenate kinase from Listeria monocytogenes serotype 4b (strain CLIP80459).